Consider the following 199-residue polypeptide: Peroxynitrite isomerase (199 aa).

A GXWXGXG motif is present at residues 20 to 26 (GVWEGTG). His-190 contacts heme b.

This sequence belongs to the nitrobindin family. As to quaternary structure, homodimer. The cofactor is heme b.

The catalysed reaction is peroxynitrite = nitrate. It functions in the pathway nitrogen metabolism. Heme-binding protein able to scavenge peroxynitrite and to protect free L-tyrosine against peroxynitrite-mediated nitration, by acting as a peroxynitrite isomerase that converts peroxynitrite to nitrate. Therefore, this protein likely plays a role in peroxynitrite sensing and in the detoxification of reactive nitrogen and oxygen species (RNS and ROS, respectively). Is able to bind nitric oxide (NO) in vitro, but may act as a sensor of peroxynitrite levels in vivo. The sequence is that of Peroxynitrite isomerase from Clavibacter michiganensis subsp. michiganensis (strain NCPPB 382).